We begin with the raw amino-acid sequence, 132 residues long: Small ribosomal subunit protein uS8c (132 aa).

It belongs to the universal ribosomal protein uS8 family. In terms of assembly, part of the 30S ribosomal subunit.

It localises to the plastid. It is found in the chloroplast. Its function is as follows. One of the primary rRNA binding proteins, it binds directly to 16S rRNA central domain where it helps coordinate assembly of the platform of the 30S subunit. This chain is Small ribosomal subunit protein uS8c (rps8), found in Nandina domestica (Heavenly bamboo).